Consider the following 296-residue polypeptide: Phosphoribosylaminoimidazole-succinocarboxamide synthase (296 aa).

Belongs to the SAICAR synthetase family.

The catalysed reaction is 5-amino-1-(5-phospho-D-ribosyl)imidazole-4-carboxylate + L-aspartate + ATP = (2S)-2-[5-amino-1-(5-phospho-beta-D-ribosyl)imidazole-4-carboxamido]succinate + ADP + phosphate + 2 H(+). Its pathway is purine metabolism; IMP biosynthesis via de novo pathway; 5-amino-1-(5-phospho-D-ribosyl)imidazole-4-carboxamide from 5-amino-1-(5-phospho-D-ribosyl)imidazole-4-carboxylate: step 1/2. The chain is Phosphoribosylaminoimidazole-succinocarboxamide synthase from Lachnospira eligens (strain ATCC 27750 / DSM 3376 / VPI C15-48 / C15-B4) (Eubacterium eligens).